The chain runs to 1150 residues: MDADWGEIAQYHTQLGYRPDPTNPSAHHSAPTAVAFDTRSELLWVGKDQGRVAAYVYFLNNGIMEFQRHIAFLSHPRQQGPVHQFLFNETGVISLGSHNVHMAQRGGMCLANIGHVNMTNLRCMTFTSRGTSEILVAGDQDTMFVIDLNKKQITKEVPAPNHYFLMKKSKYICAASRNGCVDILDPITLKVINTWNTRSAQLNDMDVQHDFIVTCGASLKQGTYMADPYVNVFDLKNMRSFPPISFPPLVTYARMHPKMVTTSIVVSKTGQMHVVDIANPHNPIVRQVLGHTHLALFDVSPSGQAMVFTDTEGYIHVWGPTSKAVSFVDQGLPVEFETEQPNFASIPWSEDFPVNMVGLPHYSDALLSAWPADLSSDVGAPPAQFDQAYVDAMMPNGNVGLYGKAVAGTRRNQVVDTRSADKPQSSLQAPKFLSEKARDGFKGLTMDTSDIETSEDIVPSPIRTDIESLKSVVPNMYHLFEIKFSKFGVDDFDFGYYNKTHHSGLENHITNSYANSLLQLLRFTPILRNLALQHAATSCLDQHCLLCELGYLCDSMEKARGASCQATNMLKMLSQHPAAANLHLLDGDRIASSSAMKIQGLLRFLLDFMSRDYGKTSPGINDLENATATSSQSLIRCDQCKSETSRPQTNYVQDLAYSPVTSNGNKGVDVADSYLAAQQGVARGRMAPAKLPSFSQILKKSIEREQVTRGWCTTCRGYQPLSMRKIIKSIPQVLAANTCISSVEEKKLWATPGWLPEEVGFIIDKEHIFCYEGAELDWLIKNGKYKLYVYSLMGLVVNIEPGPTFKPHPVAIINAAHSEPQKPAKSQWHLFNDFHVKPISAREALTFNTSWKTPLVVMFQLKAANNHIDSTWLQRLDTSILYQDQSPEAEDKSYTLLDRNKEAPTPGTVIAIDAEFVLAKDFEYAVNSDGEKETIRPRIHSLGRVSVVRASGDRRGVPFIDDYINIKEPIVNYFTEFSGLTETDLDPKTSRHNLVPLKLAFKKLWLLLNLGCIFVGHGLRSDFRVINLQVPREQVHDTQELFWVEAQRRKLSLAFLAKSVLNLEIQGHMHDSIEDANTAQLLYWKYKELLESGRLHEELKKIYAFGVKHGFRPVKVAGQSAQRTETPPMVDDAQPGALLPYQPPELLQGS.

WD repeat units lie at residues 26-67, 114-156, 158-194, and 290-328; these read AHHS…MEFQ, GHVN…ITKE, PAPN…VINT, and GHTH…VSFV. The linker stretch occupies residues 326–471; that stretch reads SFVDQGLPVE…IRTDIESLKS (146 aa). Positions 472-862 constitute a USP domain; the sequence is VVPNMYHLFE…TPLVVMFQLK (391 aa). Residues 911–1079 enclose the Exonuclease domain; sequence AIDAEFVLAK…HDSIEDANTA (169 aa). The a divalent metal cation site is built by Asp913, Glu915, Asp1022, and Asp1075. A disordered region spans residues 1118–1150; it reads GQSAQRTETPPMVDDAQPGALLPYQPPELLQGS.

This sequence belongs to the peptidase C19 family. PAN2 subfamily. In terms of assembly, forms a heterotrimer with an asymmetric homodimer of the regulatory subunit PAN3 to form the poly(A)-nuclease (PAN) deadenylation complex. Requires a divalent metal cation as cofactor.

It is found in the cytoplasm. It carries out the reaction Exonucleolytic cleavage of poly(A) to 5'-AMP.. With respect to regulation, positively regulated by the regulatory subunit PAN3. Functionally, catalytic subunit of the poly(A)-nuclease (PAN) deadenylation complex, one of two cytoplasmic mRNA deadenylases involved in mRNA turnover. PAN specifically shortens poly(A) tails of RNA and the activity is stimulated by poly(A)-binding protein PAB1. PAN deadenylation is followed by rapid degradation of the shortened mRNA tails by the CCR4-NOT complex. Deadenylated mRNAs are then degraded by two alternative mechanisms, namely exosome-mediated 3'-5' exonucleolytic degradation, or deadenylation-dependent mRNA decaping and subsequent 5'-3' exonucleolytic degradation by XRN1. May also be involved in post-transcriptional maturation of mRNA poly(A) tails. This chain is PAN2-PAN3 deadenylation complex catalytic subunit PAN2, found in Pyricularia oryzae (strain 70-15 / ATCC MYA-4617 / FGSC 8958) (Rice blast fungus).